We begin with the raw amino-acid sequence, 160 residues long: Transcription elongation factor GreA (160 aa).

Belongs to the GreA/GreB family.

In terms of biological role, necessary for efficient RNA polymerase transcription elongation past template-encoded arresting sites. The arresting sites in DNA have the property of trapping a certain fraction of elongating RNA polymerases that pass through, resulting in locked ternary complexes. Cleavage of the nascent transcript by cleavage factors such as GreA or GreB allows the resumption of elongation from the new 3'terminus. GreA releases sequences of 2 to 3 nucleotides. The chain is Transcription elongation factor GreA from Francisella philomiragia subsp. philomiragia (strain ATCC 25017 / CCUG 19701 / FSC 153 / O#319-036).